The primary structure comprises 252 residues: Cysteine-rich repeat secretory protein 38 (252 aa).

Residues 1–27 (MSSLKRIVWFPILAIAIQILSIHTVLS) form the signal peptide. Gnk2-homologous domains follow at residues 34 to 136 (FLFH…STNF) and 142 to 248 (FENR…IYPF).

The protein belongs to the cysteine-rich repeat secretory protein family.

The protein resides in the secreted. The chain is Cysteine-rich repeat secretory protein 38 (CRRSP38) from Arabidopsis thaliana (Mouse-ear cress).